Consider the following 89-residue polypeptide: Small ribosomal subunit protein uS19 (89 aa).

The protein belongs to the universal ribosomal protein uS19 family.

In terms of biological role, protein S19 forms a complex with S13 that binds strongly to the 16S ribosomal RNA. This is Small ribosomal subunit protein uS19 from Rhodopirellula baltica (strain DSM 10527 / NCIMB 13988 / SH1).